Here is a 96-residue protein sequence, read N- to C-terminus: Protein YdfX (96 aa).

This chain is Protein YdfX (ydfX), found in Escherichia coli (strain K12).